The primary structure comprises 163 residues: Cytosolic iron-sulfur assembly component 2B (163 aa).

It belongs to the MIP18 family.

It localises to the nucleus. It is found in the cytoplasm. The protein resides in the cytoskeleton. Its subcellular location is the spindle. Functionally, component of the cytosolic iron-sulfur (Fe/S) protein assembly machinery. Required for the maturation of extramitochondrial Fe/S proteins. May play a role in chromosome segregation through establishment of sister chromatid cohesion. In Dictyostelium discoideum (Social amoeba), this protein is Cytosolic iron-sulfur assembly component 2B.